The following is a 220-amino-acid chain: Imidazoleglycerol-phosphate dehydratase (220 aa).

Substrate is bound by residues E14, 64-72 (HMIHALAKH), 90-94 (HHTTE), R116, and R138. H64, H90, H91, and E94 together coordinate Mn(2+). Positions 162, 186, 187, and 190 each coordinate Mn(2+). Substrate-binding positions include 186 to 194 (HHRSESAFK) and 214 to 216 (STK).

It belongs to the imidazoleglycerol-phosphate dehydratase family. Mn(2+) is required as a cofactor.

It catalyses the reaction D-erythro-1-(imidazol-4-yl)glycerol 3-phosphate = 3-(imidazol-4-yl)-2-oxopropyl phosphate + H2O. It participates in amino-acid biosynthesis; L-histidine biosynthesis; L-histidine from 5-phospho-alpha-D-ribose 1-diphosphate: step 6/9. The polypeptide is Imidazoleglycerol-phosphate dehydratase (Saccharomyces cerevisiae (strain ATCC 204508 / S288c) (Baker's yeast)).